The primary structure comprises 174 residues: Gamma-crystallin A (174 aa).

2 Beta/gamma crystallin 'Greek key' domains span residues 2–40 (GKITFYEDRDFQGRCYNCISDCPNLRVYFSRCNSIRVDS) and 41–83 (GCWM…RIIP). The interval 84-87 (HTSS) is connecting peptide. 2 consecutive Beta/gamma crystallin 'Greek key' domains span residues 88 to 128 (HKLR…HVLE) and 129 to 171 (GCWV…RRVT).

It belongs to the beta/gamma-crystallin family. In terms of assembly, monomer.

Crystallins are the dominant structural components of the vertebrate eye lens. This chain is Gamma-crystallin A (CRYGA), found in Homo sapiens (Human).